A 202-amino-acid polypeptide reads, in one-letter code: Glycerol-3-phosphate acyltransferase (202 aa).

Helical transmembrane passes span 2-22 (MIIVMLLLSYLIGAFPSGFVI), 54-74 (FLVTFLDIFKGFITVFFPLWL), 85-105 (FFTNGLIVGLFAILGHVYPVY), 120-140 (VVLGVNPILLLILAIIFFIVL), 141-161 (KIFKYVSLASIVAAICCVIGS), and 162-182 (LIIQDYILLVVSFLVSIILII).

The protein belongs to the PlsY family. Probably interacts with PlsX.

It localises to the cell membrane. It catalyses the reaction an acyl phosphate + sn-glycerol 3-phosphate = a 1-acyl-sn-glycero-3-phosphate + phosphate. Its pathway is lipid metabolism; phospholipid metabolism. In terms of biological role, catalyzes the transfer of an acyl group from acyl-phosphate (acyl-PO(4)) to glycerol-3-phosphate (G3P) to form lysophosphatidic acid (LPA). This enzyme utilizes acyl-phosphate as fatty acyl donor, but not acyl-CoA or acyl-ACP. This is Glycerol-3-phosphate acyltransferase from Staphylococcus aureus (strain Mu3 / ATCC 700698).